A 258-amino-acid polypeptide reads, in one-letter code: MLILISPAKTLDYQSPLTTTRYTLPELLDNSQQLIHEARKLTPPQISTLMRISDKLAGINAARFHDWQPDFTPENARQAILAFKGDVYTGLQAETFSEDDFDFTQQHLRMLSGLYGVLRPLDLMQPYRLEMGIRLENARGKDLYQFWGDIITNKLNEALAAQGDNVVINLASDEYFKSVKPKKLNAEIIKPVFLDEKNGKFKIISFYAKKARGLMSRFIIENRLTKPEQLTGFNSEGYFFDEASSSNGELVFKRYEQR.

The protein belongs to the UPF0246 family.

The polypeptide is UPF0246 protein YaaA (Shigella dysenteriae serotype 1 (strain Sd197)).